A 183-amino-acid polypeptide reads, in one-letter code: Adenine phosphoribosyltransferase (183 aa).

This sequence belongs to the purine/pyrimidine phosphoribosyltransferase family. In terms of assembly, homodimer.

Its subcellular location is the cytoplasm. It catalyses the reaction AMP + diphosphate = 5-phospho-alpha-D-ribose 1-diphosphate + adenine. It participates in purine metabolism; AMP biosynthesis via salvage pathway; AMP from adenine: step 1/1. In terms of biological role, catalyzes a salvage reaction resulting in the formation of AMP, that is energically less costly than de novo synthesis. The polypeptide is Adenine phosphoribosyltransferase (Shewanella halifaxensis (strain HAW-EB4)).